Consider the following 76-residue polypeptide: Kappa-actitoxin-Avd4e (76 aa).

Positions 1–19 (MNKALFLCLVVLCAAVVFA) are cleaved as a signal peptide. Residues 20 to 31 (AEDLQKAKHAPF) constitute a propeptide that is removed on maturation. Intrachain disulfides connect C37–C72, C39–C65, and C55–C73. The Cell attachment site motif lies at 45 to 47 (RGD).

It belongs to the sea anemone type 3 (BDS) potassium channel toxin family. Moderately expressed in the ectodermal tissue from the distal and proximal tentacles, body wall, and oral disk.

Its subcellular location is the secreted. The protein resides in the nematocyst. Functionally, is member of a fraction that shows antiangiogenic activity, since it inhibits human microvascular endothelial cells (HMEC) tubulogenesis. This protein could be a kunitz-type inhibitor with a RGD motif that could block angiogenesis in binding on integrins. Blocks Kv3 voltage-gated potassium channels. Reduces blood pressure. This Anemonia viridis (Snakelocks anemone) protein is Kappa-actitoxin-Avd4e.